The sequence spans 67 residues: Large ribosomal subunit protein uL29 (67 aa).

This sequence belongs to the universal ribosomal protein uL29 family.

The protein is Large ribosomal subunit protein uL29 of Pelotomaculum thermopropionicum (strain DSM 13744 / JCM 10971 / SI).